Reading from the N-terminus, the 251-residue chain is UPF0246 protein TM1040_2658 (251 aa).

It belongs to the UPF0246 family.

This is UPF0246 protein TM1040_2658 from Ruegeria sp. (strain TM1040) (Silicibacter sp.).